Reading from the N-terminus, the 210-residue chain is Large ribosomal subunit protein uL3 (210 aa).

The interval 126 to 152 (HGFRGGPKTHGQSDRHRAPGSIGAGTT) is disordered.

This sequence belongs to the universal ribosomal protein uL3 family. As to quaternary structure, part of the 50S ribosomal subunit. Forms a cluster with proteins L14 and L19.

Functionally, one of the primary rRNA binding proteins, it binds directly near the 3'-end of the 23S rRNA, where it nucleates assembly of the 50S subunit. The polypeptide is Large ribosomal subunit protein uL3 (Chloroflexus aurantiacus (strain ATCC 29366 / DSM 635 / J-10-fl)).